The chain runs to 153 residues: UPF0179 protein AF_2154 (153 aa).

It belongs to the UPF0179 family.

The sequence is that of UPF0179 protein AF_2154 from Archaeoglobus fulgidus (strain ATCC 49558 / DSM 4304 / JCM 9628 / NBRC 100126 / VC-16).